A 129-amino-acid chain; its full sequence is UPF0102 protein Ctha_1382 (129 aa).

Belongs to the UPF0102 family.

This chain is UPF0102 protein Ctha_1382, found in Chloroherpeton thalassium (strain ATCC 35110 / GB-78).